The sequence spans 277 residues: 2,5-diketo-D-gluconic acid reductase B (277 aa).

Tyr-51 serves as the catalytic Proton donor. Residue His-109 coordinates substrate. 189-242 (SPLARRSELLTEQLLQELAVVYGVTPTQVVLRWHVQLGSTPIPKSADPDRQREN) contributes to the NADP(+) binding site.

Belongs to the aldo/keto reductase family.

The protein resides in the cytoplasm. It catalyses the reaction 2-dehydro-D-gluconate + NADP(+) = 2,5-didehydro-D-gluconate + NADPH + H(+). Catalyzes the reduction of 2,5-diketo-D-gluconic acid (25DKG) to 2-keto-L-gulonic acid (2KLG). 25DKGR-B has higher catalytic efficiency than 25DKGR-A. The chain is 2,5-diketo-D-gluconic acid reductase B (dkgB) from Corynebacterium sp. (strain SHS752001).